Consider the following 70-residue polypeptide: Large ribosomal subunit protein bL31 (70 aa).

Residues Cys-16, Cys-18, Cys-37, and Cys-40 each coordinate Zn(2+).

Belongs to the bacterial ribosomal protein bL31 family. Type A subfamily. Part of the 50S ribosomal subunit. Zn(2+) is required as a cofactor.

Binds the 23S rRNA. The protein is Large ribosomal subunit protein bL31 of Haemophilus ducreyi (strain 35000HP / ATCC 700724).